The primary structure comprises 434 residues: Histidine--tRNA ligase (434 aa).

It belongs to the class-II aminoacyl-tRNA synthetase family. As to quaternary structure, homodimer.

It localises to the cytoplasm. The catalysed reaction is tRNA(His) + L-histidine + ATP = L-histidyl-tRNA(His) + AMP + diphosphate + H(+). This Chlorobium phaeobacteroides (strain BS1) protein is Histidine--tRNA ligase.